Consider the following 296-residue polypeptide: Meiotically up-regulated gene 2 protein (296 aa).

This sequence belongs to the UPF0612 family.

Its subcellular location is the cytoplasm. It is found in the nucleus. Its function is as follows. Has a role in meiosis. The polypeptide is Meiotically up-regulated gene 2 protein (mug2) (Schizosaccharomyces pombe (strain 972 / ATCC 24843) (Fission yeast)).